We begin with the raw amino-acid sequence, 211 residues long: Methylthioribulose-1-phosphate dehydratase (211 aa).

Positions 97 and 99 each coordinate Zn(2+).

Belongs to the aldolase class II family. MtnB subfamily. Homotetramer. Zn(2+) serves as cofactor.

The catalysed reaction is 5-(methylsulfanyl)-D-ribulose 1-phosphate = 5-methylsulfanyl-2,3-dioxopentyl phosphate + H2O. It participates in amino-acid biosynthesis; L-methionine biosynthesis via salvage pathway; L-methionine from S-methyl-5-thio-alpha-D-ribose 1-phosphate: step 2/6. In terms of biological role, catalyzes the dehydration of methylthioribulose-1-phosphate (MTRu-1-P) into 2,3-diketo-5-methylthiopentyl-1-phosphate (DK-MTP-1-P). In Geobacillus thermodenitrificans (strain NG80-2), this protein is Methylthioribulose-1-phosphate dehydratase.